Reading from the N-terminus, the 634-residue chain is Threonine--tRNA ligase (634 aa).

In terms of domain architecture, TGS spans 1 to 61 (MINITLPDGS…DHDASLRIIT (61 aa)). The segment at 243–534 (DHRRIGKAQD…LIEHHAGAFP (292 aa)) is catalytic. The Zn(2+) site is built by C334, H385, and H511.

This sequence belongs to the class-II aminoacyl-tRNA synthetase family. In terms of assembly, homodimer. Requires Zn(2+) as cofactor.

It localises to the cytoplasm. It carries out the reaction tRNA(Thr) + L-threonine + ATP = L-threonyl-tRNA(Thr) + AMP + diphosphate + H(+). Catalyzes the attachment of threonine to tRNA(Thr) in a two-step reaction: L-threonine is first activated by ATP to form Thr-AMP and then transferred to the acceptor end of tRNA(Thr). Also edits incorrectly charged L-seryl-tRNA(Thr). In Xanthomonas oryzae pv. oryzae (strain MAFF 311018), this protein is Threonine--tRNA ligase.